The chain runs to 347 residues: Anthranilate phosphoribosyltransferase (347 aa).

5-phospho-alpha-D-ribose 1-diphosphate is bound by residues G88, 91–92 (GD), T96, 98–101 (NIST), 116–124 (KHGNRAASS), and S128. G88 contacts anthranilate. S100 provides a ligand contact to Mg(2+). N119 serves as a coordination point for anthranilate. Position 174 (R174) interacts with anthranilate. Positions 233 and 234 each coordinate Mg(2+).

Belongs to the anthranilate phosphoribosyltransferase family. In terms of assembly, homodimer. The cofactor is Mg(2+).

The enzyme catalyses N-(5-phospho-beta-D-ribosyl)anthranilate + diphosphate = 5-phospho-alpha-D-ribose 1-diphosphate + anthranilate. It functions in the pathway amino-acid biosynthesis; L-tryptophan biosynthesis; L-tryptophan from chorismate: step 2/5. Functionally, catalyzes the transfer of the phosphoribosyl group of 5-phosphorylribose-1-pyrophosphate (PRPP) to anthranilate to yield N-(5'-phosphoribosyl)-anthranilate (PRA). This is Anthranilate phosphoribosyltransferase from Rhodospirillum rubrum (strain ATCC 11170 / ATH 1.1.1 / DSM 467 / LMG 4362 / NCIMB 8255 / S1).